The sequence spans 610 residues: UvrABC system protein C (610 aa).

Positions 16-94 (NQPGVYRMYN…IKQYLPKYNV (79 aa)) constitute a GIY-YIG domain. One can recognise a UVR domain in the interval 204-239 (NQVLSILVEKMEQASRELRFEDAAKARDQIQAIRRV).

This sequence belongs to the UvrC family. In terms of assembly, interacts with UvrB in an incision complex.

The protein resides in the cytoplasm. Its function is as follows. The UvrABC repair system catalyzes the recognition and processing of DNA lesions. UvrC both incises the 5' and 3' sides of the lesion. The N-terminal half is responsible for the 3' incision and the C-terminal half is responsible for the 5' incision. The sequence is that of UvrABC system protein C from Vibrio cholerae serotype O1 (strain ATCC 39315 / El Tor Inaba N16961).